We begin with the raw amino-acid sequence, 170 residues long: Cyclic pyranopterin monophosphate synthase (170 aa).

Residues 75–77 (MCH) and 115–116 (ME) contribute to the substrate site. The active site involves aspartate 130.

Belongs to the MoaC family. As to quaternary structure, homohexamer; trimer of dimers.

It catalyses the reaction (8S)-3',8-cyclo-7,8-dihydroguanosine 5'-triphosphate = cyclic pyranopterin phosphate + diphosphate. It participates in cofactor biosynthesis; molybdopterin biosynthesis. Catalyzes the conversion of (8S)-3',8-cyclo-7,8-dihydroguanosine 5'-triphosphate to cyclic pyranopterin monophosphate (cPMP). The chain is Cyclic pyranopterin monophosphate synthase from Bacillus subtilis (strain 168).